A 226-amino-acid polypeptide reads, in one-letter code: Phosphoglycolate phosphatase (226 aa).

The active-site Nucleophile is Asp-8. Mg(2+)-binding residues include Asp-8 and Asp-10. Lys-152 lines the substrate pocket. Residues Asp-175 and Asp-179 each coordinate Mg(2+).

This sequence belongs to the archaeal SPP-like hydrolase family. Requires Mg(2+) as cofactor.

The catalysed reaction is 2-phosphoglycolate + H2O = glycolate + phosphate. Functionally, catalyzes the dephosphorylation of 2-phosphoglycolate. The polypeptide is Phosphoglycolate phosphatase (Natronomonas pharaonis (strain ATCC 35678 / DSM 2160 / CIP 103997 / JCM 8858 / NBRC 14720 / NCIMB 2260 / Gabara) (Halobacterium pharaonis)).